We begin with the raw amino-acid sequence, 238 residues long: tRNA (guanine-N(1)-)-methyltransferase (238 aa).

Residues glycine 108 and 127 to 132 (LGDFVL) contribute to the S-adenosyl-L-methionine site.

This sequence belongs to the RNA methyltransferase TrmD family. Homodimer.

The protein localises to the cytoplasm. The enzyme catalyses guanosine(37) in tRNA + S-adenosyl-L-methionine = N(1)-methylguanosine(37) in tRNA + S-adenosyl-L-homocysteine + H(+). Its function is as follows. Specifically methylates guanosine-37 in various tRNAs. This is tRNA (guanine-N(1)-)-methyltransferase from Streptococcus uberis (strain ATCC BAA-854 / 0140J).